The chain runs to 420 residues: MAPK/MAK/MRK overlapping kinase (420 aa).

A Protein kinase domain is found at 4-285; that stretch reads YKAIGKIGEG…AHQALQHPYF (282 aa). Residues 10-18 and Lys33 contribute to the ATP site; that span reads IGEGTFSEV. Asp128 functions as the Proton acceptor in the catalytic mechanism. The segment covering 311-322 has biased composition (polar residues); that stretch reads PESSSHNWSFSQ. Positions 311-344 are disordered; that stretch reads PESSSHNWSFSQEGRKQKQSLRHEEGHARRQGPT. Residues 323 to 338 are compositionally biased toward basic and acidic residues; it reads EGRKQKQSLRHEEGHA.

The protein belongs to the protein kinase superfamily. CMGC Ser/Thr protein kinase family. CDC2/CDKX subfamily. Mg(2+) serves as cofactor. Autophosphorylated. Highly expressed in testis, and less in kidney, brain and lung.

Its subcellular location is the cytoplasm. It localises to the cell projection. The protein localises to the cilium. It is found in the nucleus. It carries out the reaction L-seryl-[protein] + ATP = O-phospho-L-seryl-[protein] + ADP + H(+). The catalysed reaction is L-threonyl-[protein] + ATP = O-phospho-L-threonyl-[protein] + ADP + H(+). Its activity is regulated as follows. Phosphorylation appears to increase the enzymatic activity. Functionally, able to phosphorylate several exogenous substrates and to undergo autophosphorylation. Negatively regulates cilium length in a cAMP and mTORC1 signaling-dependent manner. This Mus musculus (Mouse) protein is MAPK/MAK/MRK overlapping kinase (Mok).